We begin with the raw amino-acid sequence, 426 residues long: Protein trichome birefringence-like 19 (426 aa).

The helical; Signal-anchor for type II membrane protein transmembrane segment at 15–35 (LLIAVTIATSLLTIIPLLYPL) threads the bilayer. The GDS motif signature appears at 142–144 (GDS). The DCXHWCLPGXXDXWN motif signature appears at 388–402 (DCVHWCLPGPIDNLN).

It belongs to the PC-esterase family. TBL subfamily.

Its subcellular location is the membrane. Functionally, may act as a bridging protein that binds pectin and other cell wall polysaccharides. Probably involved in maintaining esterification of pectins. May be involved in the specific O-acetylation of cell wall polymers. This Arabidopsis thaliana (Mouse-ear cress) protein is Protein trichome birefringence-like 19 (TBL19).